The primary structure comprises 651 residues: Probable replication restart protein PriA (651 aa).

The Zn(2+) site is built by cysteine 371, cysteine 374, cysteine 380, cysteine 383, cysteine 399, cysteine 402, cysteine 411, and cysteine 414.

This sequence belongs to the helicase family. PriA subfamily. Component of the replication restart primosome. Requires Zn(2+) as cofactor.

Its function is as follows. Initiates the restart of stalled replication forks, which reloads the replicative helicase on sites other than the origin of replication. Recognizes and binds to abandoned replication forks and remodels them to uncover a helicase loading site. Promotes assembly of the primosome at these replication forks. The chain is Probable replication restart protein PriA from Mycobacterium leprae (strain TN).